The sequence spans 508 residues: Sugar transport protein 12 (508 aa).

Over Met-1–Tyr-22 the chain is Cytoplasmic. A run of 12 helical transmembrane segments spans residues Val-23–Ile-43, Val-80–Ala-100, Val-118–Val-138, Leu-141–Met-161, Ile-172–Phe-192, Leu-201–Pro-221, Leu-294–Gly-314, Ala-317–Ile-337, Phe-347–Ile-367, Trp-383–Trp-403, Ile-426–Leu-446, and Phe-451–Phe-471. The Cytoplasmic segment spans residues Leu-472 to Ile-508.

Belongs to the major facilitator superfamily. Sugar transporter (TC 2.A.1.1) family.

The protein localises to the membrane. Functionally, mediates an active uptake of hexoses, probably by sugar/hydrogen symport. This is Sugar transport protein 12 (STP12) from Arabidopsis thaliana (Mouse-ear cress).